The sequence spans 106 residues: Iron-sulfur cluster assembly protein CyaY (106 aa).

It belongs to the frataxin family.

Its function is as follows. Involved in iron-sulfur (Fe-S) cluster assembly. May act as a regulator of Fe-S biogenesis. This Escherichia coli O9:H4 (strain HS) protein is Iron-sulfur cluster assembly protein CyaY.